We begin with the raw amino-acid sequence, 216 residues long: Large ribosomal subunit protein uL3 (216 aa).

Gln157 carries the post-translational modification N5-methylglutamine.

The protein belongs to the universal ribosomal protein uL3 family. Part of the 50S ribosomal subunit. Forms a cluster with proteins L14 and L19. Methylated by PrmB.

One of the primary rRNA binding proteins, it binds directly near the 3'-end of the 23S rRNA, where it nucleates assembly of the 50S subunit. In Xanthomonas oryzae pv. oryzae (strain MAFF 311018), this protein is Large ribosomal subunit protein uL3.